We begin with the raw amino-acid sequence, 564 residues long: Major facilitator superfamily transporter MPN_076 (564 aa).

Helical transmembrane passes span 1–21, 65–85, 89–109, 176–196, 220–240, 249–269, 306–326, 358–378, 404–424, 425–445, 457–477, and 501–521; these read MLWAIVLLGYLLFVVEWFVID, ITLLRAVGSVLCGIVVLKFGY, VMIMMGLMCLCFPFLIIGDPL, IAGYALFIIFRSTIAIGGTTL, NLWGFNSGIVVAFVPFLFQSV, VFILTALILIGFGILCVFAWF, MIGMYGICLVVLVNPLTGGWW, AGLPTLAILWVLGYGMGYMVF, IVIVLFAATLGVGTAVGFAFV, AIATFIGGSFAWSMQSTILIL, VSVLFGYIWGFGYVIYTAFDI, and GAIAGVALFAGLLLAAIAIVV.

The protein belongs to the major facilitator superfamily.

The protein resides in the cell membrane. The protein is Major facilitator superfamily transporter MPN_076 of Mycoplasma pneumoniae (strain ATCC 29342 / M129 / Subtype 1) (Mycoplasmoides pneumoniae).